We begin with the raw amino-acid sequence, 101 residues long: NAD(P)H-quinone oxidoreductase subunit 4L, chloroplastic (101 aa).

3 helical membrane-spanning segments follow: residues isoleucine 2–isoleucine 22, methionine 32–phenylalanine 52, and isoleucine 61–valine 81.

The protein belongs to the complex I subunit 4L family. In terms of assembly, NDH is composed of at least 16 different subunits, 5 of which are encoded in the nucleus.

The protein localises to the plastid. The protein resides in the chloroplast thylakoid membrane. The enzyme catalyses a plastoquinone + NADH + (n+1) H(+)(in) = a plastoquinol + NAD(+) + n H(+)(out). The catalysed reaction is a plastoquinone + NADPH + (n+1) H(+)(in) = a plastoquinol + NADP(+) + n H(+)(out). NDH shuttles electrons from NAD(P)H:plastoquinone, via FMN and iron-sulfur (Fe-S) centers, to quinones in the photosynthetic chain and possibly in a chloroplast respiratory chain. The immediate electron acceptor for the enzyme in this species is believed to be plastoquinone. Couples the redox reaction to proton translocation, and thus conserves the redox energy in a proton gradient. In Phaseolus vulgaris (Kidney bean), this protein is NAD(P)H-quinone oxidoreductase subunit 4L, chloroplastic.